The sequence spans 180 residues: ATP synthase subunit delta (180 aa).

This sequence belongs to the ATPase delta chain family. As to quaternary structure, F-type ATPases have 2 components, F(1) - the catalytic core - and F(0) - the membrane proton channel. F(1) has five subunits: alpha(3), beta(3), gamma(1), delta(1), epsilon(1). F(0) has three main subunits: a(1), b(2) and c(10-14). The alpha and beta chains form an alternating ring which encloses part of the gamma chain. F(1) is attached to F(0) by a central stalk formed by the gamma and epsilon chains, while a peripheral stalk is formed by the delta and b chains.

The protein localises to the cell inner membrane. Functionally, f(1)F(0) ATP synthase produces ATP from ADP in the presence of a proton or sodium gradient. F-type ATPases consist of two structural domains, F(1) containing the extramembraneous catalytic core and F(0) containing the membrane proton channel, linked together by a central stalk and a peripheral stalk. During catalysis, ATP synthesis in the catalytic domain of F(1) is coupled via a rotary mechanism of the central stalk subunits to proton translocation. Its function is as follows. This protein is part of the stalk that links CF(0) to CF(1). It either transmits conformational changes from CF(0) to CF(1) or is implicated in proton conduction. The polypeptide is ATP synthase subunit delta (Geobacter sp. (strain M21)).